We begin with the raw amino-acid sequence, 967 residues long: Transmembrane channel-like protein 5 (967 aa).

Composition is skewed to polar residues over residues 1 to 10 (MSSFHQNSSY), 21 to 31 (GSRNHTHNYLE), 53 to 62 (NPHSSGSRTN), and 168 to 184 (QDNS…SNLP). The tract at residues 1 to 240 (MSSFHQNSSY…EEGDGYSSSK (240 aa)) is disordered. The Extracellular segment spans residues 1–420 (MSSFHQNSSY…YFSFLRWLLK (420 aa)). The helical transmembrane segment at 421 to 441 (FNIFSFVMNFSFIIIPQFTVG) threads the bilayer. At 442 to 449 (AKNTLQFT) the chain is on the cytoplasmic side. Residues 450–470 (GLEFFTGAGYFGDTVMYYGFY) traverse the membrane as a helical segment. The Extracellular portion of the chain corresponds to 471-487 (TNSTIRHRMGGASYNMQ). Residues 488-508 (LAYIFTIGACLVVCFFSLLFS) traverse the membrane as a helical segment. At 509 to 581 (MAKYFRNNFI…NQQLTRFSAH (73 aa)) the chain is on the cytoplasmic side. Residues 582-602 (VAAWLVSTGVTAACCVAVYYL) traverse the membrane as a helical segment. The Extracellular portion of the chain corresponds to 603 to 616 (AEYNSEFLKTHRNP). A helical transmembrane segment spans residues 617–637 (GAVLLLPFVVSCINLAVPRFY). Over 638–660 (SMFRLVERYEIPRQEVYVLLVRN) the chain is Cytoplasmic. The chain crosses the membrane as a helical span at residues 661-681 (IFLKISIVGILCYYWLNIVAL). Topologically, residues 682–694 (SGEECWETLIGQD) are extracellular. Residues 695 to 715 (IYRLLLMDFVFSLADSLLGEF) traverse the membrane as a helical segment. The Cytoplasmic portion of the chain corresponds to 716 to 749 (LRRLIGMKFTSLSLQEFDIARNVLELIYAQTLTW). Residues 750 to 770 (LGIFFCPLLPFIQMITLFIMF) traverse the membrane as a helical segment. Topologically, residues 771-796 (YVKNVSLMMNFQPPSKAWRASQMITF) are extracellular. The chain crosses the membrane as a helical span at residues 797-817 (FIFLLFFPSFTGVLCTLAITI). The Cytoplasmic portion of the chain corresponds to 818–861 (WRLKPSADCGPFRGLPSFIQSIYSWIDTLSRRPGYLWVVWIYQN). Residues 862–882 (LIGSVHFFFILTLIVLIITYL) form a helical membrane-spanning segment. Over 883–967 (YWQITEGRKV…RSAQEENPIA (85 aa)) the chain is Extracellular.

This sequence belongs to the TMC family. Ubiquitously expressed.

The protein localises to the membrane. In terms of biological role, probable component of an ion channel. Molecular function hasn't been characterized yet. This Mus musculus (Mouse) protein is Transmembrane channel-like protein 5.